A 213-amino-acid chain; its full sequence is tRNA (guanine-N(7)-)-methyltransferase (213 aa).

4 residues coordinate S-adenosyl-L-methionine: D44, E69, N96, and D119. The active site involves D119. The substrate site is built by K123 and D155.

Belongs to the class I-like SAM-binding methyltransferase superfamily. TrmB family.

It catalyses the reaction guanosine(46) in tRNA + S-adenosyl-L-methionine = N(7)-methylguanosine(46) in tRNA + S-adenosyl-L-homocysteine. It participates in tRNA modification; N(7)-methylguanine-tRNA biosynthesis. Functionally, catalyzes the formation of N(7)-methylguanine at position 46 (m7G46) in tRNA. The protein is tRNA (guanine-N(7)-)-methyltransferase of Thermosynechococcus vestitus (strain NIES-2133 / IAM M-273 / BP-1).